The sequence spans 545 residues: Chaperonin GroEL (545 aa).

ATP contacts are provided by residues 30 to 33 (TLGP), K51, 87 to 91 (DGTTT), G415, 479 to 481 (NAA), and D495. The tract at residues 526 to 545 (KEDKPDLGGAGGMGGMGGMM) is disordered. Over residues 533–545 (GGAGGMGGMGGMM) the composition is skewed to gly residues.

This sequence belongs to the chaperonin (HSP60) family. Forms a cylinder of 14 subunits composed of two heptameric rings stacked back-to-back. Interacts with the co-chaperonin GroES.

It is found in the cytoplasm. It catalyses the reaction ATP + H2O + a folded polypeptide = ADP + phosphate + an unfolded polypeptide.. Functionally, together with its co-chaperonin GroES, plays an essential role in assisting protein folding. The GroEL-GroES system forms a nano-cage that allows encapsulation of the non-native substrate proteins and provides a physical environment optimized to promote and accelerate protein folding. This is Chaperonin GroEL from Sodalis glossinidius.